The chain runs to 125 residues: Small ribosomal subunit protein bS6m (125 aa).

The protein belongs to the bacterial ribosomal protein bS6 family. In terms of assembly, component of the mitochondrial ribosome small subunit (28S) which comprises a 12S rRNA and about 30 distinct proteins.

It localises to the mitochondrion. This is Small ribosomal subunit protein bS6m (Mrps6) from Mus musculus (Mouse).